The chain runs to 94 residues: Small ribosomal subunit protein uS19 (94 aa).

It belongs to the universal ribosomal protein uS19 family.

Protein S19 forms a complex with S13 that binds strongly to the 16S ribosomal RNA. This Wolbachia sp. subsp. Brugia malayi (strain TRS) protein is Small ribosomal subunit protein uS19.